The following is a 490-amino-acid chain: Cysteine--tRNA ligase (490 aa).

Residue Cys36 participates in Zn(2+) binding. Positions 38–48 (VTVYDYSHIGH) match the 'HIGH' region motif. Residues Cys216, His241, and Glu245 each contribute to the Zn(2+) site. Residues 278-282 (KMSKS) carry the 'KMSKS' region motif. Lys281 contacts ATP.

It belongs to the class-I aminoacyl-tRNA synthetase family. As to quaternary structure, monomer. Requires Zn(2+) as cofactor.

The protein resides in the cytoplasm. It catalyses the reaction tRNA(Cys) + L-cysteine + ATP = L-cysteinyl-tRNA(Cys) + AMP + diphosphate. This is Cysteine--tRNA ligase from Magnetococcus marinus (strain ATCC BAA-1437 / JCM 17883 / MC-1).